A 301-amino-acid polypeptide reads, in one-letter code: MNFAQVKDYLVDLQNRIVTGLEQVDGQSFRRDTWDRPEGGGGTSCVIEEGNVLERGGVNFSHVFGKGLPASATAARPELAGRAFEAAGVSLVLHPRNPYAPTVHMNVRFFAATKEGAEPVWWFGGGMDLTPYYGFEEDAVHFHQACKDALQPSGEEYYPRFKKWCDEYFYLKHRKEPRGIGGVFFDDLNQPDFATCFNLTRSVGDHFLAAYVPILQKRRDLPYGERERDFQAYRRGRYVEFNLVWDRGTLFGLQSGGRTESILMSLPPVVKWRYDWSPAAGSPEAKLYTDFLTGRDWLPLG.

Ser90 serves as a coordination point for substrate. 2 residues coordinate a divalent metal cation: His94 and His104. His104 functions as the Proton donor in the catalytic mechanism. Position 106–108 (106–108 (NVR)) interacts with substrate. Positions 143 and 173 each coordinate a divalent metal cation. The tract at residues 238–273 (YVEFNLVWDRGTLFGLQSGGRTESILMSLPPVVKWR) is important for dimerization. Residue 256 to 258 (GGR) participates in substrate binding.

Belongs to the aerobic coproporphyrinogen-III oxidase family. Homodimer. The cofactor is a divalent metal cation.

The protein resides in the cytoplasm. The catalysed reaction is coproporphyrinogen III + O2 + 2 H(+) = protoporphyrinogen IX + 2 CO2 + 2 H2O. Its pathway is porphyrin-containing compound metabolism; protoporphyrin-IX biosynthesis; protoporphyrinogen-IX from coproporphyrinogen-III (O2 route): step 1/1. Its function is as follows. Involved in the heme biosynthesis. Catalyzes the aerobic oxidative decarboxylation of propionate groups of rings A and B of coproporphyrinogen-III to yield the vinyl groups in protoporphyrinogen-IX. In Nitrosomonas europaea (strain ATCC 19718 / CIP 103999 / KCTC 2705 / NBRC 14298), this protein is Oxygen-dependent coproporphyrinogen-III oxidase.